The sequence spans 907 residues: Leucine-rich repeat-containing G-protein coupled receptor 5 (907 aa).

A signal peptide spans 1-21 (MDTSRLGVLLSLPVLLQLATG). Topologically, residues 22–561 (GSSPRSGVLL…EHLLDGWLIR (540 aa)) are extracellular. In terms of domain architecture, LRRNT spans 25-66 (PRSGVLLRGCPTHCHCEPDGRMLLRVDCSDLGLSELPSNLSV). Disulfide bonds link cysteine 34/cysteine 40 and cysteine 38/cysteine 52. Residues asparagine 63 and asparagine 77 are each glycosylated (N-linked (GlcNAc...) asparagine). LRR repeat units follow at residues 67–90 (FTSY…PSLR), 91–112 (FLEE…AFTG), 115–136 (SLKV…ALQN), 139–160 (SLQS…CFSG), 163–184 (SLRH…AFRS), 187–208 (ALQA…AFGN), 211–232 (SLVV…CFDG), 235–256 (SLET…IRTL), 258–279 (NLKE…AFVG), 282–303 (SLIT…AFQH), 306–328 (ELRT…TGTA), 329–350 (NLES…VCNQ), 353–374 (NLQV…SVCQ), 375–396 (KLQK…TFQQ), 399–420 (SLRS…AFST), and 423–446 (SLIK…HGLT). Asparagine 208 carries N-linked (GlcNAc...) asparagine glycosylation. An intrachain disulfide couples cysteine 348 to cysteine 373. A disulfide bridge connects residues cysteine 479 and cysteine 541. Asparagine 500 is a glycosylation site (N-linked (GlcNAc...) asparagine). A helical membrane pass occupies residues 562–582 (IGVWTIAVLALTCNALVTSTV). The Cytoplasmic portion of the chain corresponds to 583-593 (FRSPLYISPIK). The chain crosses the membrane as a helical span at residues 594-614 (LLIGVIAAVNMLTGVSSAVLA). At 615–638 (GVDAFTFGSFARHGAWWENGVGCH) the chain is on the extracellular side. Cysteine 637 and cysteine 712 are joined by a disulfide. The chain crosses the membrane as a helical span at residues 639–659 (VIGFLSIFASESSVFLLTLAA). At 660 to 682 (LERGFSVKYSAKFETKAPFSSLK) the chain is on the cytoplasmic side. A helical membrane pass occupies residues 683-703 (VIILLCALLALTMAAVPLLGG). Residues 704 to 722 (SKYGASPLCLPLPFGEPST) lie on the Extracellular side of the membrane. The chain crosses the membrane as a helical span at residues 723–743 (MGYMVALILLNSLCFLMMTIA). Over 744-767 (YTKLYCNLDKGDLENIWDCSMVKH) the chain is Cytoplasmic. The helical transmembrane segment at 768 to 788 (IALLLFTNCILNCPVAFLSFS) threads the bilayer. Residues 789–802 (SLINLTFISPEVIK) lie on the Extracellular side of the membrane. Residue asparagine 792 is glycosylated (N-linked (GlcNAc...) asparagine). A helical membrane pass occupies residues 803–823 (FILLVVVPLPACLNPLLYILF). Residues 824 to 907 (NPHFKEDLVS…LSSVAFVPCL (84 aa)) lie on the Cytoplasmic side of the membrane.

It belongs to the G-protein coupled receptor 1 family. In terms of assembly, identified in a complex composed of RNF43, LGR5 and RSPO1. Also interacts with other R-spondin ligands, including RSPO2, RSPO3 and RSPO4. As to expression, expressed in skeletal muscle, placenta, spinal cord, and various region of brain. Expressed at the base of crypts in colonic and small mucosa stem cells. In premalignant cancer expression is not restricted to the cript base. Overexpressed in cancers of the ovary, colon and liver.

The protein resides in the cell membrane. It is found in the golgi apparatus. The protein localises to the trans-Golgi network membrane. Receptor for R-spondins that potentiates the canonical Wnt signaling pathway and acts as a stem cell marker of the intestinal epithelium and the hair follicle. Upon binding to R-spondins (RSPO1, RSPO2, RSPO3 or RSPO4), associates with phosphorylated LRP6 and frizzled receptors that are activated by extracellular Wnt receptors, triggering the canonical Wnt signaling pathway to increase expression of target genes. In contrast to classical G-protein coupled receptors, does not activate heterotrimeric G-proteins to transduce the signal. Involved in the development and/or maintenance of the adult intestinal stem cells during postembryonic development. The chain is Leucine-rich repeat-containing G-protein coupled receptor 5 (LGR5) from Homo sapiens (Human).